Here is a 325-residue protein sequence, read N- to C-terminus: Glutarate 2-hydroxylase (325 aa).

Fe cation-binding residues include histidine 160, aspartate 162, and histidine 292.

It belongs to the glutarate hydroxylase family. In terms of assembly, homotetramer. Fe(2+) serves as cofactor.

It carries out the reaction glutarate + 2-oxoglutarate + O2 = (S)-2-hydroxyglutarate + succinate + CO2. It functions in the pathway amino-acid degradation. Acts as an alpha-ketoglutarate-dependent dioxygenase catalyzing hydroxylation of glutarate (GA) to L-2-hydroxyglutarate (L2HG). Functions in a L-lysine degradation pathway that proceeds via cadaverine, glutarate and L-2-hydroxyglutarate. The protein is Glutarate 2-hydroxylase of Escherichia coli O17:K52:H18 (strain UMN026 / ExPEC).